A 397-amino-acid chain; its full sequence is Urea transporter 2 (397 aa).

Transmembrane regions (helical) follow at residues 68-85, 92-109, 115-135, 143-163, and 172-192; these read VMFV…IGLF, AIAG…ALIL, AIAS…IAVF, WWLL…SSAL, and LPVF…ATGH. Asparagine 210 carries N-linked (GlcNAc...) asparagine glycosylation. Helical transmembrane passes span 239 to 257, 264 to 280, 287 to 303, 309 to 329, and 331 to 351; these read WTGG…LICL, TMGM…FDSI, FNST…FYVI, LLAV…TNVL, and VFGL…FLLL.

The protein belongs to the urea transporter family. Kidney.

It is found in the apical cell membrane. It localises to the basolateral cell membrane. It carries out the reaction urea(in) = urea(out). Inhibited by urea analogs and phloretin. Mediates the transport of urea driven by a concentration gradient across the cell membrane of the renal inner medullary collecting duct which is critical to the urinary concentrating mechanism. The sequence is that of Urea transporter 2 (SLC14A2) from Oryctolagus cuniculus (Rabbit).